We begin with the raw amino-acid sequence, 104 residues long: Turripeptide OL55 (104 aa).

Post-translationally, contains 8 disulfide bonds. Expressed by the venom duct.

The protein resides in the secreted. Acts as a neurotoxin by inhibiting an ion channel. This is Turripeptide OL55 from Iotyrris olangoensis (Sea snail).